The primary structure comprises 654 residues: Bifunctional polymyxin resistance protein ArnA (654 aa).

Residues 1 to 303 (MKVIVFAYHE…NISRIKGKKL (303 aa)) form a formyltransferase ArnAFT region. The Proton donor; for formyltransferase activity role is filled by H105. Residue 137 to 141 (TKKID) participates in (6R)-10-formyltetrahydrofolate binding. Positions 313-654 (NLKKILILGV…INFFINNNTS (342 aa)) are dehydrogenase ArnADH. NAD(+) is bound by residues D346 and 367–368 (DI). Residues A392, Y397, and 431-432 (TS) each bind UDP-alpha-D-glucuronate. The active-site Proton acceptor; for decarboxylase activity is E433. UDP-alpha-D-glucuronate is bound by residues R459, N491, 532-534 (QKR), and Y612. The Proton donor; for decarboxylase activity role is filled by R618.

In the N-terminal section; belongs to the Fmt family. UDP-L-Ara4N formyltransferase subfamily. This sequence in the C-terminal section; belongs to the NAD(P)-dependent epimerase/dehydratase family. UDP-glucuronic acid decarboxylase subfamily. Homohexamer, formed by a dimer of trimers.

The catalysed reaction is UDP-alpha-D-glucuronate + NAD(+) = UDP-beta-L-threo-pentopyranos-4-ulose + CO2 + NADH. It catalyses the reaction UDP-4-amino-4-deoxy-beta-L-arabinose + (6R)-10-formyltetrahydrofolate = UDP-4-deoxy-4-formamido-beta-L-arabinose + (6S)-5,6,7,8-tetrahydrofolate + H(+). It functions in the pathway nucleotide-sugar biosynthesis; UDP-4-deoxy-4-formamido-beta-L-arabinose biosynthesis; UDP-4-deoxy-4-formamido-beta-L-arabinose from UDP-alpha-D-glucuronate: step 1/3. It participates in nucleotide-sugar biosynthesis; UDP-4-deoxy-4-formamido-beta-L-arabinose biosynthesis; UDP-4-deoxy-4-formamido-beta-L-arabinose from UDP-alpha-D-glucuronate: step 3/3. The protein operates within bacterial outer membrane biogenesis; lipopolysaccharide biosynthesis. Bifunctional enzyme that catalyzes the oxidative decarboxylation of UDP-glucuronic acid (UDP-GlcUA) to UDP-4-keto-arabinose (UDP-Ara4O) and the addition of a formyl group to UDP-4-amino-4-deoxy-L-arabinose (UDP-L-Ara4N) to form UDP-L-4-formamido-arabinose (UDP-L-Ara4FN). The modified arabinose is attached to lipid A and is required for resistance to polymyxin and cationic antimicrobial peptides. In Wigglesworthia glossinidia brevipalpis, this protein is Bifunctional polymyxin resistance protein ArnA.